A 365-amino-acid chain; its full sequence is Peptide chain release factor 1 (365 aa).

Q240 is modified (N5-methylglutamine).

Belongs to the prokaryotic/mitochondrial release factor family. Post-translationally, methylated by PrmC. Methylation increases the termination efficiency of RF1.

The protein resides in the cytoplasm. Peptide chain release factor 1 directs the termination of translation in response to the peptide chain termination codons UAG and UAA. In Bifidobacterium animalis subsp. lactis (strain AD011), this protein is Peptide chain release factor 1.